Consider the following 404-residue polypeptide: Glucose-1-phosphate adenylyltransferase (404 aa).

Alpha-D-glucose 1-phosphate-binding positions include Tyr99, Gly164, 179–180 (EK), and Ser197.

Belongs to the bacterial/plant glucose-1-phosphate adenylyltransferase family.

It carries out the reaction alpha-D-glucose 1-phosphate + ATP + H(+) = ADP-alpha-D-glucose + diphosphate. Its pathway is capsule biogenesis; capsule polysaccharide biosynthesis. It functions in the pathway glycan biosynthesis; glycogen biosynthesis. Functionally, involved in the biosynthesis of ADP-glucose, a building block, required in the biosynthesis of maltose-1-phosphate (M1P) and in the elongation reactions to produce linear alpha-1,4-glucans. Catalyzes the reaction between ATP and alpha-D-glucose 1-phosphate (G1P) to produce pyrophosphate and ADP-Glc. In Mycobacteroides abscessus (strain ATCC 19977 / DSM 44196 / CCUG 20993 / CIP 104536 / JCM 13569 / NCTC 13031 / TMC 1543 / L948) (Mycobacterium abscessus), this protein is Glucose-1-phosphate adenylyltransferase.